We begin with the raw amino-acid sequence, 417 residues long: UDP-N-acetylglucosamine 1-carboxyvinyltransferase 2 (417 aa).

22-23 lines the phosphoenolpyruvate pocket; it reads KN. Arg94 contributes to the UDP-N-acetyl-alpha-D-glucosamine binding site. Cys118 (proton donor) is an active-site residue. At Cys118 the chain carries 2-(S-cysteinyl)pyruvic acid O-phosphothioketal. Residues 123 to 127, Asp306, and Ile328 each bind UDP-N-acetyl-alpha-D-glucosamine; that span reads RPIDL.

This sequence belongs to the EPSP synthase family. MurA subfamily.

Its subcellular location is the cytoplasm. It carries out the reaction phosphoenolpyruvate + UDP-N-acetyl-alpha-D-glucosamine = UDP-N-acetyl-3-O-(1-carboxyvinyl)-alpha-D-glucosamine + phosphate. It participates in cell wall biogenesis; peptidoglycan biosynthesis. Cell wall formation. Adds enolpyruvyl to UDP-N-acetylglucosamine. This chain is UDP-N-acetylglucosamine 1-carboxyvinyltransferase 2, found in Clostridium tetani (strain Massachusetts / E88).